A 271-amino-acid polypeptide reads, in one-letter code: PA-phosphatase related-family protein DDB_G0284367 (271 aa).

6 helical membrane passes run 23–43 (FLCL…IPPF), 68–88 (IVPV…VFIG), 102–122 (AALG…ILKV), 150–170 (FPSG…FYLC), 181–201 (GNIL…LVAV), and 211–231 (FSDI…VYFM).

This sequence belongs to the PA-phosphatase related phosphoesterase family.

It localises to the membrane. The protein is PA-phosphatase related-family protein DDB_G0284367 of Dictyostelium discoideum (Social amoeba).